The following is a 485-amino-acid chain: NADH-quinone oxidoreductase subunit N (485 aa).

14 helical membrane-spanning segments follow: residues 10 to 30 (ILPE…GLFL), 40 to 60 (IFFQ…EYLI), 71 to 91 (VVFS…AVFV), 107 to 127 (GDFY…TAAH), 129 to 149 (LVTI…LIAI), 164 to 184 (FVLG…VYGM), 209 to 229 (FLLV…GAFP), 248 to 268 (IVAT…LFVG), 276 to 296 (WIYL…LVAL), 304 to 324 (LLGY…TLNP), 336 to 356 (VIVY…ISVG), 377 to 397 (AFIL…GGFI), 410 to 430 (GNYF…FYYV), and 454 to 474 (LIAL…PMLL).

Belongs to the complex I subunit 2 family. In terms of assembly, NDH-1 is composed of 14 different subunits. Subunits NuoA, H, J, K, L, M, N constitute the membrane sector of the complex.

It is found in the cell inner membrane. The enzyme catalyses a quinone + NADH + 5 H(+)(in) = a quinol + NAD(+) + 4 H(+)(out). NDH-1 shuttles electrons from NADH, via FMN and iron-sulfur (Fe-S) centers, to quinones in the respiratory chain. The immediate electron acceptor for the enzyme in this species is believed to be ubiquinone. Couples the redox reaction to proton translocation (for every two electrons transferred, four hydrogen ions are translocated across the cytoplasmic membrane), and thus conserves the redox energy in a proton gradient. This is NADH-quinone oxidoreductase subunit N from Francisella tularensis subsp. holarctica (strain FTNF002-00 / FTA).